Consider the following 272-residue polypeptide: Shikimate dehydrogenase (NADP(+)) (272 aa).

Residues 14-16 and T61 each bind shikimate; that span reads SKS. The active-site Proton acceptor is the K65. E77 is an NADP(+) binding site. Shikimate-binding residues include N86 and D102. NADP(+)-binding positions include 126 to 130, 149 to 154, and M213; these read GAGGA and NRTVSR. Y215 provides a ligand contact to shikimate. NADP(+) is bound at residue G237.

It belongs to the shikimate dehydrogenase family. As to quaternary structure, homodimer.

It catalyses the reaction shikimate + NADP(+) = 3-dehydroshikimate + NADPH + H(+). It functions in the pathway metabolic intermediate biosynthesis; chorismate biosynthesis; chorismate from D-erythrose 4-phosphate and phosphoenolpyruvate: step 4/7. Its function is as follows. Involved in the biosynthesis of the chorismate, which leads to the biosynthesis of aromatic amino acids. Catalyzes the reversible NADPH linked reduction of 3-dehydroshikimate (DHSA) to yield shikimate (SA). The polypeptide is Shikimate dehydrogenase (NADP(+)) (Shigella boydii serotype 4 (strain Sb227)).